A 272-amino-acid chain; its full sequence is Indole-3-glycerol phosphate synthase (272 aa).

This sequence belongs to the TrpC family.

The enzyme catalyses 1-(2-carboxyphenylamino)-1-deoxy-D-ribulose 5-phosphate + H(+) = (1S,2R)-1-C-(indol-3-yl)glycerol 3-phosphate + CO2 + H2O. It functions in the pathway amino-acid biosynthesis; L-tryptophan biosynthesis; L-tryptophan from chorismate: step 4/5. This Arthrobacter sp. (strain FB24) protein is Indole-3-glycerol phosphate synthase.